Here is a 192-residue protein sequence, read N- to C-terminus: Ubiquitin-conjugating enzyme E2 27 (192 aa).

The UBC core domain maps to 2-150; it reads IDFSRIQKEL…ARYWTETFAK (149 aa). The active-site Glycyl thioester intermediate is the Cys88. Positions 153–192 constitute a UBA domain; it reads SLEEKVKRLVEMGFGDAQVRSAIESSGGDENLALEKLCSA.

The protein belongs to the ubiquitin-conjugating enzyme family. As to expression, expressed in seeds, pistils, siliques, hypocotyls and leaves.

The catalysed reaction is S-ubiquitinyl-[E1 ubiquitin-activating enzyme]-L-cysteine + [E2 ubiquitin-conjugating enzyme]-L-cysteine = [E1 ubiquitin-activating enzyme]-L-cysteine + S-ubiquitinyl-[E2 ubiquitin-conjugating enzyme]-L-cysteine.. It participates in protein modification; protein ubiquitination. Its function is as follows. Accepts the ubiquitin from the E1 complex and catalyzes its covalent attachment to other proteins. The polypeptide is Ubiquitin-conjugating enzyme E2 27 (UBC27) (Arabidopsis thaliana (Mouse-ear cress)).